The primary structure comprises 102 residues: Large ribosomal subunit protein eL31 (102 aa).

This sequence belongs to the eukaryotic ribosomal protein eL31 family.

The polypeptide is Large ribosomal subunit protein eL31 (Staphylothermus marinus (strain ATCC 43588 / DSM 3639 / JCM 9404 / F1)).